Consider the following 310-residue polypeptide: Pirin-like protein At1g50590 (310 aa).

Belongs to the pirin family.

The protein localises to the nucleus. This is Pirin-like protein At1g50590 from Arabidopsis thaliana (Mouse-ear cress).